The primary structure comprises 131 residues: Large-conductance mechanosensitive channel (131 aa).

Helical transmembrane passes span 8-28 (FAMR…GAFG), 30-50 (IVSS…LGGV), and 67-87 (GMFI…FVFV).

This sequence belongs to the MscL family. In terms of assembly, homopentamer.

The protein localises to the cell membrane. Channel that opens in response to stretch forces in the membrane lipid bilayer. May participate in the regulation of osmotic pressure changes within the cell. The polypeptide is Large-conductance mechanosensitive channel (Geobacillus sp. (strain WCH70)).